The primary structure comprises 196 residues: Molybdenum cofactor guanylyltransferase (196 aa).

Residues 10-12 (LAG), lysine 23, asparagine 51, aspartate 69, and aspartate 99 each bind GTP. Residue aspartate 99 coordinates Mg(2+).

It belongs to the MobA family. Monomer. It depends on Mg(2+) as a cofactor.

The protein resides in the cytoplasm. The catalysed reaction is Mo-molybdopterin + GTP + H(+) = Mo-molybdopterin guanine dinucleotide + diphosphate. Functionally, transfers a GMP moiety from GTP to Mo-molybdopterin (Mo-MPT) cofactor (Moco or molybdenum cofactor) to form Mo-molybdopterin guanine dinucleotide (Mo-MGD) cofactor. The protein is Molybdenum cofactor guanylyltransferase of Shewanella sp. (strain W3-18-1).